The following is a 430-amino-acid chain: Alpha-1,6-mannosyl-glycoprotein 2-beta-N-acetylglucosaminyltransferase (430 aa).

Topologically, residues 1-12 (MANLWKKQRLRD) are cytoplasmic. The helical; Signal-anchor for type II membrane protein transmembrane segment at 13–35 (TGLCRLGILFAVTLSIVLMLVSV) threads the bilayer. Topologically, residues 36-430 (PRTALNGSSI…YRYSSSSASP (395 aa)) are lumenal. Residues Asn41 and Asn61 are each glycosylated (N-linked (GlcNAc...) asparagine). Substrate-binding positions include 104–108 (YVHNR) and Asp135. Cys177 and Cys188 are oxidised to a cystine. 205 to 209 (SLKHH) is a substrate binding site. Asp237 is a binding site for Mn(2+). Cys259 and Cys262 form a disulfide bridge. Asn295 carries N-linked (GlcNAc...) asparagine glycosylation. A disulfide bridge connects residues Cys310 and Cys414. Mn(2+) is bound at residue His345.

The protein belongs to the glycosyltransferase 16 (GT16) protein family. It depends on Mn(2+) as a cofactor.

It is found in the golgi apparatus membrane. The enzyme catalyses an N(4)-{beta-D-GlcNAc-(1-&gt;2)-alpha-D-Man-(1-&gt;3)-[alpha-D-Man-(1-&gt;6)]-beta-D-Man-(1-&gt;4)-beta-D-GlcNAc-(1-&gt;4)-beta-D-GlcNAc}-L-asparaginyl-[protein] + UDP-N-acetyl-alpha-D-glucosamine = N(4)-{beta-D-GlcNAc-(1-&gt;2)-alpha-D-Man-(1-&gt;3)-[beta-D-GlcNAc-(1-&gt;2)-alpha-D-Man-(1-&gt;6)]-beta-D-Man-(1-&gt;4)-beta-D-GlcNAc-(1-&gt;4)-beta-D-GlcNAc}-L-asparaginyl-[protein] + UDP + H(+). The protein operates within protein modification; protein glycosylation. Its function is as follows. Catalyzes an essential step in the conversion of oligo-mannose and hybrid to complex N-glycans. The protein is Alpha-1,6-mannosyl-glycoprotein 2-beta-N-acetylglucosaminyltransferase of Arabidopsis thaliana (Mouse-ear cress).